The sequence spans 327 residues: Phenylalanine--tRNA ligase alpha subunit (327 aa).

Glu252 serves as a coordination point for Mg(2+).

The protein belongs to the class-II aminoacyl-tRNA synthetase family. Phe-tRNA synthetase alpha subunit type 1 subfamily. Tetramer of two alpha and two beta subunits. It depends on Mg(2+) as a cofactor.

Its subcellular location is the cytoplasm. It carries out the reaction tRNA(Phe) + L-phenylalanine + ATP = L-phenylalanyl-tRNA(Phe) + AMP + diphosphate + H(+). This Shewanella baltica (strain OS185) protein is Phenylalanine--tRNA ligase alpha subunit.